The sequence spans 159 residues: MFRLSAARTLAKSVNTVVAKRTYAEAADGALKLQFALPHQTLFSGTPVTQVNLPAKSGQIGILANHVPTVEQLVPGVVEVLEGSSSKKFFVSGGFATVQPDSTLAITSVEAFPLESFSPENVRSLLAEAQKNVSSADEVAAAEAAIQLEVLEALQAALK.

The transit peptide at M1 to Y23 directs the protein to the mitochondrion.

The protein belongs to the ATPase epsilon chain family. As to quaternary structure, F-type ATPases have 2 components, CF(1) - the catalytic core - and CF(0) - the membrane proton channel. CF(1) has five subunits: alpha(3), beta(3), gamma(1), delta(1), epsilon(1). CF(0) has three main subunits: a, b and c.

Its subcellular location is the mitochondrion. It localises to the mitochondrion inner membrane. Its function is as follows. Mitochondrial membrane ATP synthase (F(1)F(0) ATP synthase or Complex V) produces ATP from ADP in the presence of a proton gradient across the membrane which is generated by electron transport complexes of the respiratory chain. F-type ATPases consist of two structural domains, F(1) - containing the extramembraneous catalytic core, and F(0) - containing the membrane proton channel, linked together by a central stalk and a peripheral stalk. During catalysis, ATP turnover in the catalytic domain of F(1) is coupled via a rotary mechanism of the central stalk subunits to proton translocation. Part of the complex F(1) domain and of the central stalk which is part of the complex rotary element. Rotation of the central stalk against the surrounding alpha(3)beta(3) subunits leads to hydrolysis of ATP in three separate catalytic sites on the beta subunits. The sequence is that of ATP synthase subunit delta, mitochondrial (ATP16) from Kluyveromyces lactis (strain ATCC 8585 / CBS 2359 / DSM 70799 / NBRC 1267 / NRRL Y-1140 / WM37) (Yeast).